Reading from the N-terminus, the 1607-residue chain is Phosphatidylinositol 3-kinase piki-1 (1607 aa).

In terms of domain architecture, UIM spans 2 to 21 (SDDEELQLAIEISKKTFKDE). Disordered stretches follow at residues 54–91 (EANS…HSQS), 105–128 (STSQ…KFPP), and 142–182 (PPPP…SFAS). A compositionally biased stretch (polar residues) spans 58-69 (PGPSSYSGSLAT). Residues 158 to 169 (PPVPIHPTPPVS) are compositionally biased toward pro residues. Residues 362-453 (ASTVKVVVYK…GDDVKLDLGV (92 aa)) form the PI3K-RBD domain. The C2 PI3K-type domain maps to 598–766 (KMDFLQIMLN…KIWDTEIYFP (169 aa)). A PIK helical domain is found at 776–953 (PQDFATLDIE…AIRCQNLQQK (178 aa)). Residues 1029-1303 (RIEECSVFNS…MIQNSLGSAF (275 aa)) enclose the PI3K/PI4K catalytic domain. A G-loop region spans residues 1035 to 1041 (VFNSNAK). The tract at residues 1168–1176 (GIGDRHNDN) is catalytic loop. An activation loop region spans residues 1187-1213 (HIDFGKYMGDWQMAAGFRRDRVPFVFT). A PX domain is found at 1344 to 1458 (GRISRVTVLK…TFFHSILRDN (115 aa)). The C2 domain maps to 1472–1601 (SQCQIYLKIE…KNCRTLEGWF (130 aa)).

The protein belongs to the PI3/PI4-kinase family.

The protein localises to the cell projection. Its subcellular location is the phagocytic cup. It localises to the cytoplasmic vesicle. The protein resides in the phagosome membrane. It is found in the cytoplasm. It catalyses the reaction a 1,2-diacyl-sn-glycero-3-phospho-(1D-myo-inositol) + ATP = a 1,2-diacyl-sn-glycero-3-phospho-(1D-myo-inositol-3-phosphate) + ADP + H(+). Its function is as follows. Phosphatidylinositol 3-kinase involved in clearance of apoptotic cell corpses by phagosomes. Phagosome maturation requires two sequential and non-overlapping pulses of phosphatidylinositol-3-phosphate (PI3P) on the vesicle surface which mediates recruitment of sortins snx-1 and lst-4 and small GTPases rab-5, rab-2 and rab-7. The first pulse is initiated by piki-1, then maintained by vps-34 which also produces the second pulse. Unlike vps-34, not involved in the formation of PI3P in early endosomes. This chain is Phosphatidylinositol 3-kinase piki-1, found in Caenorhabditis elegans.